The following is a 143-amino-acid chain: Small ribosomal subunit protein bS6 (143 aa).

Residues 97–143 (DTEQSLIMKSKDEKGDKHERSERRRRDDEEGDVPAATDTDGDNAEAA) form a disordered region. Residues 105–124 (KSKDEKGDKHERSERRRRDD) are compositionally biased toward basic and acidic residues.

The protein belongs to the bacterial ribosomal protein bS6 family.

Its function is as follows. Binds together with bS18 to 16S ribosomal RNA. The chain is Small ribosomal subunit protein bS6 from Xanthomonas oryzae pv. oryzae (strain MAFF 311018).